The sequence spans 538 residues: Phosphoenolpyruvate carboxykinase (ATP) (538 aa).

Substrate is bound by residues R62, Y203, and K209. Residues K209, H228, and 244 to 252 (GLSGTGKTT) contribute to the ATP site. Mn(2+) is bound by residues K209 and H228. Residue D265 coordinates Mn(2+). Residues E293, R329, 445-446 (RI), and T451 contribute to the ATP site. R329 lines the substrate pocket.

It belongs to the phosphoenolpyruvate carboxykinase (ATP) family. Monomer. It depends on Mn(2+) as a cofactor.

It localises to the cytoplasm. It carries out the reaction oxaloacetate + ATP = phosphoenolpyruvate + ADP + CO2. The protein operates within carbohydrate biosynthesis; gluconeogenesis. In terms of biological role, involved in the gluconeogenesis. Catalyzes the conversion of oxaloacetate (OAA) to phosphoenolpyruvate (PEP) through direct phosphoryl transfer between the nucleoside triphosphate and OAA. This Haemophilus ducreyi (strain 35000HP / ATCC 700724) protein is Phosphoenolpyruvate carboxykinase (ATP).